An 814-amino-acid polypeptide reads, in one-letter code: Testis-specific zinc finger protein topi (814 aa).

10 C2H2-type zinc fingers span residues 228–250 (NECTMCDRKFVHASGLVRHMEKH), 275–297 (VKCNSCGRIFYDPQVAFRHGLIH), 360–382 (LQCEFCEYIFADIAELLVHSASH), 429–453 (FVCNVCELKFANTDLLQEHRCTSFH), 467–490 (LPCDFCDVNFEFAHDFLAHSEEKH), 511–533 (YLCDICGKSYTQSSHLWQHLRFH), 539–564 (FVCQEENCDRKFTIRPDLNDHIRKCH), 570–592 (YLCLVCGKRFLTGSVFYQHRLIH), 598–620 (YECEECGKRFYRADALKNHQRIH), and 626–649 (YSCLFCTKTFRQRGDRDKHIRARH). Residues 669-705 (TAAAQKAQSHNPEQQDNDVAGGASTSDVPSGSGFMST) form a disordered region. The span at 691-705 (ASTSDVPSGSGFMST) shows a compositional bias: polar residues.

In terms of assembly, interacts with comr. In terms of tissue distribution, expressed in testis; primary spermatocytes.

The protein resides in the nucleus. In terms of biological role, required for male meiotic division and spermatid differentiation. Required for accumulation of aly and comr on chromatin. May function as a transcription factor. This chain is Testis-specific zinc finger protein topi (topi), found in Drosophila melanogaster (Fruit fly).